The chain runs to 331 residues: MNIYRRYGWELALAALLVLEIGLFGLSNSRMLDINVLLFSTSDFICIGIVALPLTMVIVSGGIDISFGSTIGLCSIFLGVMFQAGVPMSIAIPLTLLVGALCGLINAGLILYTGVNPLVITLGTMYLFGGSALLLSGISGATGYEGIGGFPTAFTDFANQTLLGLPVPLVIFMVCVLLFWLLMHRTHSGRNVFLIGQNSRVARYSALPVARTLCLLYALTGMASAIAAVLLVSYFGSARSDLGASFLMPAITAVVLGGANIYGGSGSILGTALAVLLVGYLQQGLQMIGTPNQISSALSGALLILVVVGRSISLHRHLIYEWLQRRRNTVV.

10 helical membrane-spanning segments follow: residues 7 to 27 (YGWE…FGLS), 45 to 65 (ICIG…GIDI), 67 to 87 (FGST…AGVP), 90 to 110 (IAIP…AGLI), 118 to 138 (LVIT…LSGI), 162 to 182 (LLGL…FWLL), 212 to 232 (TLCL…VLLV), 240 to 260 (SDLG…GGAN), 261 to 281 (IYGG…VGYL), and 288 to 308 (IGTP…LVVV).

It belongs to the binding-protein-dependent transport system permease family. AraH/RbsC subfamily. The complex is composed of two ATP-binding proteins (LsrA), two transmembrane proteins (LsrC and LsrD) and a solute-binding protein (LsrB).

The protein localises to the cell inner membrane. In terms of biological role, part of the ABC transporter complex LsrABCD involved in autoinducer 2 (AI-2) import. Probably responsible for the translocation of the substrate across the membrane. The chain is Autoinducer 2 import system permease protein LsrD (lsrD) from Yersinia enterocolitica serotype O:8 / biotype 1B (strain NCTC 13174 / 8081).